A 64-amino-acid polypeptide reads, in one-letter code: MKNKTHKGTAKRVKVTGSGKLVREQANRRHLLEGKPSTRTRRLKGIVEVSPADTKRMKRLLGKA.

A compositionally biased stretch (basic residues) spans 1 to 14 (MKNKTHKGTAKRVK). The interval 1 to 30 (MKNKTHKGTAKRVKVTGSGKLVREQANRRH) is disordered. The segment covering 21–30 (LVREQANRRH) has biased composition (basic and acidic residues).

Belongs to the bacterial ribosomal protein bL35 family.

The chain is Large ribosomal subunit protein bL35 from Corynebacterium efficiens (strain DSM 44549 / YS-314 / AJ 12310 / JCM 11189 / NBRC 100395).